The following is a 449-amino-acid chain: GTPase Der (449 aa).

2 consecutive EngA-type G domains span residues 2-169 (FTVA…QLPP) and 180-355 (VRFC…EQLT). GTP is bound by residues 8–15 (GRPNVGKS), 55–59 (DTGGL), 118–121 (NKSE), 186–193 (GKPNVGKS), 233–237 (DTAGI), and 298–301 (NKWD). One can recognise a KH-like domain in the interval 356–440 (KKISTSLLND…PITLYFKSKN (85 aa)).

Belongs to the TRAFAC class TrmE-Era-EngA-EngB-Septin-like GTPase superfamily. EngA (Der) GTPase family. As to quaternary structure, associates with the 50S ribosomal subunit.

In terms of biological role, GTPase that plays an essential role in the late steps of ribosome biogenesis. The polypeptide is GTPase Der (Mycoplasma pneumoniae (strain ATCC 29342 / M129 / Subtype 1) (Mycoplasmoides pneumoniae)).